The following is a 359-amino-acid chain: Palmitoyltransferase PFA5 (359 aa).

The next 4 membrane-spanning stretches (helical) occupy residues 10-30 (WWYSLVPILCICIMCYGAIAY), 47-67 (AAAIGMTCLHLIIVILLWIIW), 164-184 (LFNQFLMCFLMHALIIFVSVV), and 206-226 (LVVLSLSCLVLLMVGALFISF). Residues 120–170 (VWCSVCQSLKGLRTHHSVHLGFCVPRLDHYCVWLGTVIGRRNYRLFNQFLM) enclose the DHHC domain.

Belongs to the DHHC palmitoyltransferase family. PFA5 subfamily. Autopalmitoylated.

The protein resides in the membrane. It catalyses the reaction L-cysteinyl-[protein] + hexadecanoyl-CoA = S-hexadecanoyl-L-cysteinyl-[protein] + CoA. The sequence is that of Palmitoyltransferase PFA5 (PFA5) from Eremothecium gossypii (strain ATCC 10895 / CBS 109.51 / FGSC 9923 / NRRL Y-1056) (Yeast).